Consider the following 614-residue polypeptide: Glutamine--fructose-6-phosphate aminotransferase [isomerizing] (614 aa).

Cysteine 2 serves as the catalytic Nucleophile; for GATase activity. The region spanning 2-223 (CGIIGYIGRR…DGEMAVVTRD (222 aa)) is the Glutamine amidotransferase type-2 domain. 2 consecutive SIS domains span residues 292–431 (YLDR…GRTI) and 463–604 (IAVK…VDRP). Lysine 609 serves as the catalytic For Fru-6P isomerization activity.

In terms of assembly, homodimer.

The protein localises to the cytoplasm. The catalysed reaction is D-fructose 6-phosphate + L-glutamine = D-glucosamine 6-phosphate + L-glutamate. Its function is as follows. Catalyzes the first step in hexosamine metabolism, converting fructose-6P into glucosamine-6P using glutamine as a nitrogen source. This chain is Glutamine--fructose-6-phosphate aminotransferase [isomerizing], found in Chlorobaculum tepidum (strain ATCC 49652 / DSM 12025 / NBRC 103806 / TLS) (Chlorobium tepidum).